Consider the following 145-residue polypeptide: Large ribosomal subunit protein uL15 (145 aa).

The disordered stretch occupies residues 1–52 (MKLNTIAPAEGSKKDRRRVGRGIGSGFGKTAGRGHKGQHARSGGYHKVGFEG). The span at 21-31 (RGIGSGFGKTA) shows a compositional bias: gly residues.

Belongs to the universal ribosomal protein uL15 family. In terms of assembly, part of the 50S ribosomal subunit.

Its function is as follows. Binds to the 23S rRNA. The sequence is that of Large ribosomal subunit protein uL15 from Acidithiobacillus ferrooxidans (strain ATCC 53993 / BNL-5-31) (Leptospirillum ferrooxidans (ATCC 53993)).